A 124-amino-acid polypeptide reads, in one-letter code: Small ribosomal subunit protein uS12 (124 aa).

The residue at position 89 (D89) is a 3-methylthioaspartic acid. The segment at 105–124 (QGVKNRKQARSRYGAKKEKS) is disordered. Residues 108-118 (KNRKQARSRYG) show a composition bias toward basic residues.

This sequence belongs to the universal ribosomal protein uS12 family. Part of the 30S ribosomal subunit. Contacts proteins S8 and S17. May interact with IF1 in the 30S initiation complex.

With S4 and S5 plays an important role in translational accuracy. Functionally, interacts with and stabilizes bases of the 16S rRNA that are involved in tRNA selection in the A site and with the mRNA backbone. Located at the interface of the 30S and 50S subunits, it traverses the body of the 30S subunit contacting proteins on the other side and probably holding the rRNA structure together. The combined cluster of proteins S8, S12 and S17 appears to hold together the shoulder and platform of the 30S subunit. The polypeptide is Small ribosomal subunit protein uS12 (Mycobacterium avium (strain 104)).